Here is a 156-residue protein sequence, read N- to C-terminus: ATP synthase subunit b (156 aa).

The chain crosses the membrane as a helical span at residues 7–27 (LFVQAIVFLILVLFTMKFVWP).

This sequence belongs to the ATPase B chain family. F-type ATPases have 2 components, F(1) - the catalytic core - and F(0) - the membrane proton channel. F(1) has five subunits: alpha(3), beta(3), gamma(1), delta(1), epsilon(1). F(0) has three main subunits: a(1), b(2) and c(10-14). The alpha and beta chains form an alternating ring which encloses part of the gamma chain. F(1) is attached to F(0) by a central stalk formed by the gamma and epsilon chains, while a peripheral stalk is formed by the delta and b chains.

It localises to the cell inner membrane. Its function is as follows. F(1)F(0) ATP synthase produces ATP from ADP in the presence of a proton or sodium gradient. F-type ATPases consist of two structural domains, F(1) containing the extramembraneous catalytic core and F(0) containing the membrane proton channel, linked together by a central stalk and a peripheral stalk. During catalysis, ATP synthesis in the catalytic domain of F(1) is coupled via a rotary mechanism of the central stalk subunits to proton translocation. Component of the F(0) channel, it forms part of the peripheral stalk, linking F(1) to F(0). The polypeptide is ATP synthase subunit b (Paracidovorax citrulli (strain AAC00-1) (Acidovorax citrulli)).